Consider the following 860-residue polypeptide: Leucine--tRNA ligase (860 aa).

The short motif at 42 to 52 (PYPSGRLHMGH) is the 'HIGH' region element. Positions 619 to 623 (KMSKS) match the 'KMSKS' region motif. ATP is bound at residue Lys-622.

Belongs to the class-I aminoacyl-tRNA synthetase family.

The protein resides in the cytoplasm. The enzyme catalyses tRNA(Leu) + L-leucine + ATP = L-leucyl-tRNA(Leu) + AMP + diphosphate. This chain is Leucine--tRNA ligase, found in Salmonella choleraesuis (strain SC-B67).